Here is a 266-residue protein sequence, read N- to C-terminus: Small ribosomal subunit protein eS1 (266 aa).

A disordered region spans residues 235–266 (GGAGGAAKASGDDTGAKVERADGYEPPIQETV). Over residues 244–257 (SGDDTGAKVERADG) the composition is skewed to basic and acidic residues.

This sequence belongs to the eukaryotic ribosomal protein eS1 family. Component of the small ribosomal subunit. Mature ribosomes consist of a small (40S) and a large (60S) subunit. The 40S subunit contains about 33 different proteins and 1 molecule of RNA (18S). The 60S subunit contains about 49 different proteins and 3 molecules of RNA (28S, 5.8S and 5S).

Its subcellular location is the cytoplasm. Functionally, component of the small ribosomal subunit. The ribosome is a large ribonucleoprotein complex responsible for the synthesis of proteins in the cell. This chain is Small ribosomal subunit protein eS1 (rps3a), found in Oryzias latipes (Japanese rice fish).